The primary structure comprises 481 residues: MGLALCGAAAQAQEKPNFLIIQCDHLTQRVVGAYGQTQGCTLPIDEVASRGVIFSNAYVGCPLSQPSRAALWSGMMPHQTNVRSNSSEPVNTRLPENVPTLGSLFSESGYEAVHFGKTHDMGSLRGFKHKEPVAKPFTDPEFPVNNDSFLDVGTCEDAVAYLSNPPKEPFICIADFQNPHNICGFIGENAGVHTDRPISGPLPELPDNFDVEDWSNIPTPVQYICCSHRRMTQAAHWNEENYRHYIAAFQHYTKMVSKQVDSVLKALYSTPAGRNTIVVIMADHGDGMASHRMVTKHISFYDEMTNVPFIFAGPGIKQQKKPVDHLLTQPTLDLLPTLCDLAGIAVPAEKAGISLAPTLRGEKQKKSHPYVVSEWHSEYEYVTTPGRMVRGPRYKYTHYLEGNGEELYDMKKDPGERKNLAKDPKYSKILAEHRALLDDYITRSKDDYRSLKVDADPRCRNHTPGYPSHEGPGAREILKRK.

Ser-64 is subject to 3-oxoalanine (Ser). The Zn(2+) site is built by Cys-225, Cys-226, His-462, and His-469. The disordered stretch occupies residues 453–481 (VDADPRCRNHTPGYPSHEGPGAREILKRK). Over residues 472 to 481 (PGAREILKRK) the composition is skewed to basic and acidic residues.

The protein belongs to the sulfatase family. Requires Zn(2+) as cofactor. In terms of processing, the conversion to 3-oxoalanine (also known as C-formylglycine, FGly), of a serine or cysteine residue in prokaryotes and of a cysteine residue in eukaryotes, is critical for catalytic activity.

Exosulfatase involved in the degradation of the glycosaminoglycans (GAGs) chondroitin sulfate (CS), dermatan sulfate (DS) and heparan sulfate (HS). 2-O-sulfatase active on unsaturated non-reducing end hexuronate units. Has a slight preference for HS-derived structures. GAG-specific sulfatases play a key role in the persistence of the major human gut symbiont B.thetaiotaomicron in the host gastrointestinal tract. The polypeptide is Delta 4,5-hexuronate-2-O-sulfatase (Bacteroides thetaiotaomicron (strain ATCC 29148 / DSM 2079 / JCM 5827 / CCUG 10774 / NCTC 10582 / VPI-5482 / E50)).